The sequence spans 571 residues: Hsp70-Hsp90 organizing protein 2 (571 aa).

TPR repeat units follow at residues 2–35 (ADEA…TPTN), 37–69 (VLFS…KPDW), and 70–103 (GKGY…DPSN). Positions 117-137 (ASRSRASAPNPFGDAFQGPEM) are disordered. The 40-residue stretch at 134–173 (GPEMWSKLTADPSTRGLLKQPDFVNMMKEIQRNPSNLNLY) folds into the STI1 1 domain. Position 168 is a phosphoserine (serine 168). Positions 198–207 (DDMEIGEEEM) are enriched in acidic residues. Residues 198 to 245 (DDMEIGEEEMAVPSRKEPEVEKKRKPEPEPEPEPEFGEEKQKKLKAQK) are disordered. Composition is skewed to basic and acidic residues over residues 211-225 (SRKE…KPEP) and 234-245 (GEEKQKKLKAQK). Residues 240–257 (KLKAQKEKELGNAAYKKK) carry the Bipartite nuclear localization signal motif. 6 TPR repeats span residues 243-276 (AQKE…DDED), 278-310 (SYIT…GREL), 322-355 (TRKG…HRNP), 382-415 (GDEE…NPKD), 417-449 (RAYS…DPTF), and 450-483 (LKGY…DPNN). An STI1 2 domain is found at 520–559 (DPEIQNILTDPVMRQVLSDLQENPAAAQKHMQNPMIMNKI).

In terms of assembly, co-chaperone that forms a complex with HSP70 and HSP90 and preproteins (e.g. chloroplast preproteins). Phosphorylated. Post-translationally, acetylated.

Its subcellular location is the cytoplasm. It is found in the nucleus. Its function is as follows. Mediates the association of the molecular chaperones HSP70 and HSP90. Mediates nuclear encoded chloroplast preproteins binding to HSP90 prior to chloroplastic sorting. The sequence is that of Hsp70-Hsp90 organizing protein 2 (HOP2) from Arabidopsis thaliana (Mouse-ear cress).